Here is a 1613-residue protein sequence, read N- to C-terminus: NAD-specific glutamate dehydrogenase (1613 aa).

Lysine 849 is a catalytic residue.

This sequence belongs to the Glu/Leu/Phe/Val dehydrogenases family.

The enzyme catalyses L-glutamate + NAD(+) + H2O = 2-oxoglutarate + NH4(+) + NADH + H(+). In terms of biological role, involved in arginine catabolism by converting L-glutamate, into 2-oxoglutarate, which is then channeled into the tricarboxylic acid cycle. The protein is NAD-specific glutamate dehydrogenase of Halomonas elongata (strain ATCC 33173 / DSM 2581 / NBRC 15536 / NCIMB 2198 / 1H9).